The sequence spans 647 residues: Phosphatidylinositol polyphosphate 5-phosphatase type IV (647 aa).

3 disordered regions span residues 1 to 80, 101 to 131, and 177 to 196; these read MPSK…QPPI, RGSQ…PAYS, and HRDA…HASH. Copy 1 of the repeat occupies 52–55; the sequence is PMPP. The segment at 52 to 243 is 3 X 4 AA repeats of P-X-X-P; sequence PMPPFSIPAK…AHSNLGPSRP (192 aa). Over residues 60-75 the composition is skewed to polar residues; that stretch reads AKTSNQNPQTKANLIT. The stretch at 76 to 79 is repeat 2; sequence PQPP. Serine 103 carries the post-translational modification Phosphoserine. Positions 120 to 129 are enriched in polar residues; it reads LQDSVAQSPA. Threonine 197 carries the phosphothreonine modification. The stretch at 240–243 is repeat 3; the sequence is PSRP. Serine 245 and serine 259 each carry phosphoserine. The residue at position 644 (cysteine 644) is a Cysteine methyl ester. A lipid anchor (S-farnesyl cysteine) is attached at cysteine 644. A propeptide spans 645-647 (removed in mature form); sequence TVS.

This sequence belongs to the inositol polyphosphate 5-phosphatase family. As to quaternary structure, interacts (when prenylated) with PDE6D; this is important for normal location in cilia. Highly expressed in testis, in pachytene and diplotene spermatocytes, but not in more mature elongating spermatids. Detected in neurons throughout the brain.

It is found in the cytoplasm. It localises to the cytoskeleton. The protein localises to the cilium axoneme. The protein resides in the golgi apparatus. Its subcellular location is the golgi stack membrane. It is found in the cell projection. It localises to the ruffle. The protein localises to the cell membrane. The protein resides in the nucleus. It carries out the reaction a 1,2-diacyl-sn-glycero-3-phospho-(1D-myo-inositol-4,5-bisphosphate) + H2O = a 1,2-diacyl-sn-glycero-3-phospho-(1D-myo-inositol 4-phosphate) + phosphate. The catalysed reaction is a 1,2-diacyl-sn-glycero-3-phospho-(1D-myo-inositol-3,4,5-trisphosphate) + H2O = a 1,2-diacyl-sn-glycero-3-phospho-(1D-myo-inositol-3,4-bisphosphate) + phosphate. The enzyme catalyses a 1,2-diacyl-sn-glycero-3-phospho-(1D-myo-inositol-3,5-bisphosphate) + H2O = a 1,2-diacyl-sn-glycero-3-phospho-(1D-myo-inositol-3-phosphate) + phosphate. In terms of biological role, phosphatidylinositol (PtdIns) phosphatase that specifically hydrolyzes the 5-phosphate of phosphatidylinositol-3,4,5-trisphosphate (PtdIns(3,4,5)P3), phosphatidylinositol 4,5-bisphosphate (PtdIns(4,5)P2) and phosphatidylinositol 3,5-bisphosphate (PtdIns(3,5)P2). Specific for lipid substrates, inactive towards water soluble inositol phosphates. Specific for lipid substrates, inactive towards water soluble inositol phosphates. Plays an essential role in the primary cilium by controlling ciliary growth and phosphoinositide 3-kinase (PI3K) signaling and stability. The chain is Phosphatidylinositol polyphosphate 5-phosphatase type IV (Inpp5e) from Mus musculus (Mouse).